A 159-amino-acid polypeptide reads, in one-letter code: Regulator of G-protein signaling 13 (159 aa).

An RGS domain is found at 34-150 (SFENLMATKY…LKSEMYQKLL (117 aa)).

Functionally, inhibits signal transduction by increasing the GTPase activity of G protein alpha subunits thereby driving them into their inactive GDP-bound form. Binds to both G(i)-alpha and G(q)-alpha. The sequence is that of Regulator of G-protein signaling 13 (RGS13) from Homo sapiens (Human).